We begin with the raw amino-acid sequence, 258 residues long: Thiamine thiazole synthase (258 aa).

NAD(+) contacts are provided by residues Ser36, 55–56 (ER), Gly63, Val127, and 153–155 (HVD). Positions 155 and 170 each coordinate Fe cation. Residue Met224 participates in NAD(+) binding. Arg234 serves as a coordination point for glycine.

Belongs to the THI4 family. In terms of assembly, homooctamer; tetramer of dimers. Fe(2+) is required as a cofactor.

The catalysed reaction is hydrogen sulfide + glycine + NAD(+) = ADP-5-ethyl-4-methylthiazole-2-carboxylate + nicotinamide + 3 H2O + H(+). The protein operates within cofactor biosynthesis; thiamine diphosphate biosynthesis. Involved in the biosynthesis of the thiazole moiety of thiamine. Catalyzes the conversion of NAD and glycine to adenosine diphosphate 5-(2-hydroxyethyl)-4-methylthiazole-2-carboxylate (ADT), an adenylated thiazole intermediate, using free sulfide as a source of sulfur. This Desulfosudis oleivorans (strain DSM 6200 / JCM 39069 / Hxd3) (Desulfococcus oleovorans) protein is Thiamine thiazole synthase.